Reading from the N-terminus, the 274-residue chain is Ciliary microtubule inner protein 2B (274 aa).

Disordered stretches follow at residues 46–89 and 119–171; these read SPGL…SSMV and TQRN…MDDR. Residues 130-155 are compositionally biased toward basic and acidic residues; that stretch reads LPKEAKGEKDVEKDQEPKPEVEKEPE.

The protein belongs to the CIMIP2 family. As to quaternary structure, microtubule inner protein component of sperm flagellar doublet microtubules. Expressed in trachea multiciliated cells.

The protein localises to the cytoplasm. It is found in the cytoskeleton. Its subcellular location is the cilium axoneme. It localises to the flagellum axoneme. In terms of biological role, microtubule inner protein (MIP) part of the dynein-decorated doublet microtubules (DMTs) in cilia axoneme, which is required for motile cilia beating. The protein is Ciliary microtubule inner protein 2B (CIMIP2B) of Bos taurus (Bovine).